A 331-amino-acid chain; its full sequence is Protein FLX-like 1 (331 aa).

Residues 1 to 51 (MSGRNRGPPPPSMKGGSYSGLQAPVHQPPFVRGLGGGPVPPPPHPSMIDDS) form a disordered region. Residues 69–252 (ILEDRLAAQN…AEIANSETSA (184 aa)) are a coiled coil. Residues 306–321 (QAAWAGGYDPQQQQQQ) show a composition bias toward low complexity. Residues 306–331 (QAAWAGGYDPQQQQQQQPPPQGQGHR) form a disordered region. A compositionally biased stretch (pro residues) spans 322 to 331 (QPPPQGQGHR).

It belongs to the FLX family. As to quaternary structure, interacts with FRI.

Functionally, has no transcriptional activation activity. The polypeptide is Protein FLX-like 1 (FLXL1) (Arabidopsis thaliana (Mouse-ear cress)).